The sequence spans 124 residues: MAMKIRLARGGSKKRPHYAIVASDSRMPRDGRFIEKLGTYNPLLPKDSEDRIKMNLERVQYWLGQGAQPTDRVARFLEAAGVKEKAERKNLKKGEPGKAAKERAEKRAAREAAANAPAEEAASE.

Basic and acidic residues predominate over residues 84–110 (EKAERKNLKKGEPGKAAKERAEKRAAR). Residues 84 to 124 (EKAERKNLKKGEPGKAAKERAEKRAAREAAANAPAEEAASE) form a disordered region. A compositionally biased stretch (low complexity) spans 111–124 (EAAANAPAEEAASE).

It belongs to the bacterial ribosomal protein bS16 family.

This is Small ribosomal subunit protein bS16 from Paracoccus denitrificans (strain Pd 1222).